Here is a 357-residue protein sequence, read N- to C-terminus: Chorismate synthase (357 aa).

Basic and acidic residues predominate over residues 38–49 (EKDIQPDLDRRK). Positions 38–60 (EKDIQPDLDRRKPGTSRYTTPRR) are disordered. Residues Arg-48 and Arg-54 each coordinate NADP(+). FMN-binding positions include 125–127 (RSS), 243–244 (NA), Gly-283, 298–302 (KPTSS), and Arg-324.

The protein belongs to the chorismate synthase family. Homotetramer. It depends on FMNH2 as a cofactor.

It carries out the reaction 5-O-(1-carboxyvinyl)-3-phosphoshikimate = chorismate + phosphate. The protein operates within metabolic intermediate biosynthesis; chorismate biosynthesis; chorismate from D-erythrose 4-phosphate and phosphoenolpyruvate: step 7/7. Catalyzes the anti-1,4-elimination of the C-3 phosphate and the C-6 proR hydrogen from 5-enolpyruvylshikimate-3-phosphate (EPSP) to yield chorismate, which is the branch point compound that serves as the starting substrate for the three terminal pathways of aromatic amino acid biosynthesis. This reaction introduces a second double bond into the aromatic ring system. In Haemophilus influenzae (strain PittEE), this protein is Chorismate synthase.